The primary structure comprises 55 residues: UPF0391 membrane protein Sfum_0248 (55 aa).

2 helical membrane passes run 4–24 (WALIFLAVAIAAGVLGFGGII) and 28–48 (AWIAQVLFILFLVFFLVSLLS).

It belongs to the UPF0391 family.

Its subcellular location is the cell membrane. This Syntrophobacter fumaroxidans (strain DSM 10017 / MPOB) protein is UPF0391 membrane protein Sfum_0248.